We begin with the raw amino-acid sequence, 1136 residues long: Unconventional myosin-Ib (1136 aa).

One can recognise a Myosin motor domain in the interval 15-701; that stretch reads IGVGDMVLLE…TLFKLEDLRK (687 aa). S60 is subject to Phosphoserine. 108–115 lines the ATP pocket; that stretch reads GESGAGKT. Residue K287 forms a Glycyl lysine isopeptide (Lys-Gly) (interchain with G-Cter in SUMO1); alternate linkage. K287 is covalently cross-linked (Glycyl lysine isopeptide (Lys-Gly) (interchain with G-Cter in SUMO2); alternate). The segment at 578 to 600 is actin-binding; it reads VATLMKNLQTKNPNYIRCIKPND. IQ domains are found at residues 704–733, 728–748, 750–779, 779–808, 808–837, and 837–866; these read LEDL…SQIV, KKSQ…KRYQ, TKSS…QKRC, CKEA…EARN, NKHA…EARR, and RKHA…ANAG. The region spanning 952 to 1136 is the TH1 domain; the sequence is KALYPSSVGQ…NNRLLEVAVP (185 aa).

This sequence belongs to the TRAFAC class myosin-kinesin ATPase superfamily. Myosin family.

In terms of biological role, motor protein that may participate in process critical to neuronal development and function such as cell migration, neurite outgrowth and vesicular transport. In Homo sapiens (Human), this protein is Unconventional myosin-Ib (MYO1B).